The primary structure comprises 530 residues: Cation transporter HKT2;2 (530 aa).

At 1–40 the chain is on the cytoplasmic side; it reads MTSIYQEFIHTKCQSFRSIGRYVLHSIVLIYRFVSLHVHP. The next 2 membrane-spanning stretches (helical) occupy residues 41–61 and 102–122; these read FWIQ…LLMF and IVVL…FLGL. The Cytoplasmic segment spans residues 123–186; that stretch reads MLRLKHKHNP…DLKRSKRLRW (64 aa). Transmembrane regions (helical) follow at residues 187 to 207 and 260 to 280; these read FLGF…FLLV and GLLL…PLFL. Topologically, residues 281-317 are cytoplasmic; that stretch reads RILIWFLGKVTKLKDLKLMIKNSDELQYDYLLPKLPT. The next 2 membrane-spanning stretches (helical) occupy residues 318–338 and 372–392; these read AFLA…FGSV and IDCS…MYLP. The Cytoplasmic portion of the chain corresponds to 393-420; it reads PSTTFALSNGDEKTANKKAKRKLGLVVR. Helical transmembrane passes span 421-441 and 494-514; these read NLAF…LITE and SLSG…MLYG. The Cytoplasmic portion of the chain corresponds to 515 to 530; it reads RLKAFTKGTGEYWRLW.

Belongs to the TrkH potassium transport family. HKT (TC 2.A.38.3) subfamily.

It localises to the membrane. Functionally, seems to be involved in regulation of potassium-sodium homeostasis. Seems to act as a potassium-sodium cotransporter, which mediates increased potassium uptake under external sodium accumulation and contributes to salt-tolerance in cultivar indica Pokkali. The sequence is that of Cation transporter HKT2;2 from Oryza sativa subsp. indica (Rice).